The chain runs to 97 residues: Integration host factor subunit alpha (97 aa).

Positions 49-71 (FGNFDLRDKNQRPGRNPKTGEDI) are disordered.

The protein belongs to the bacterial histone-like protein family. In terms of assembly, heterodimer of an alpha and a beta chain.

Functionally, this protein is one of the two subunits of integration host factor, a specific DNA-binding protein that functions in genetic recombination as well as in transcriptional and translational control. This chain is Integration host factor subunit alpha, found in Shewanella woodyi (strain ATCC 51908 / MS32).